Here is a 215-residue protein sequence, read N- to C-terminus: CUE domain-containing protein 4, mitochondrial (215 aa).

A mitochondrion-targeting transit peptide spans 1-29 (MQPEQLAGCAVVLTVTVLTLRWMFRVDKG). Residues 48 to 90 (VNSEHVHLVKTVFPHLESSAIAYDLQKTKNVDATIENALRGQP) enclose the CUE domain. A disordered region spans residues 109–191 (GAGASSHSEE…KEREELFRKR (83 aa)). 2 stretches are compositionally biased toward low complexity: residues 122 to 140 (SHEVTSNVSSGSSASSLAS) and 153 to 165 (SSRISSSDNSSSS). Basic and acidic residues predominate over residues 180 to 191 (SKKEREELFRKR).

It localises to the mitochondrion. The polypeptide is CUE domain-containing protein 4, mitochondrial (Schizosaccharomyces pombe (strain 972 / ATCC 24843) (Fission yeast)).